We begin with the raw amino-acid sequence, 191 residues long: Polysulfide reductase chain B (191 aa).

4Fe-4S ferredoxin-type domains follow at residues Y5–V34, G50–D83, and G84–V113. Residues C14, C17, C20, C24, C61, C64, C69, C73, C93, C96, C99, C103, C120, C123, C136, and C140 each coordinate [4Fe-4S] cluster.

In terms of assembly, functional polysulfide reductase is made up of three different (A, B, and C) subunits.

In terms of biological role, component of the phosphorylative electron transport system with polysulfide as the terminal acceptor. This is Polysulfide reductase chain B (psrB) from Wolinella succinogenes (strain ATCC 29543 / DSM 1740 / CCUG 13145 / JCM 31913 / LMG 7466 / NCTC 11488 / FDC 602W) (Vibrio succinogenes).